The chain runs to 90 residues: Probable Fe(2+)-trafficking protein (90 aa).

It belongs to the Fe(2+)-trafficking protein family. As to quaternary structure, monomer.

Could be a mediator in iron transactions between iron acquisition and iron-requiring processes, such as synthesis and/or repair of Fe-S clusters in biosynthetic enzymes. This Hamiltonella defensa subsp. Acyrthosiphon pisum (strain 5AT) protein is Probable Fe(2+)-trafficking protein.